The sequence spans 231 residues: Cytidylate kinase (231 aa).

17 to 25 serves as a coordination point for ATP; that stretch reads GPTASGKGT.

It belongs to the cytidylate kinase family. Type 1 subfamily.

Its subcellular location is the cytoplasm. The enzyme catalyses CMP + ATP = CDP + ADP. It carries out the reaction dCMP + ATP = dCDP + ADP. The polypeptide is Cytidylate kinase (Ralstonia pickettii (strain 12J)).